The following is a 291-amino-acid chain: Phytanoyl-CoA dioxygenase domain-containing protein 1 (291 aa).

Phosphothreonine is present on Thr55. 2-oxoglutarate contacts are provided by residues Lys102, Met141, 156–158 (HQD), and Trp174. The Fe cation site is built by His156 and Asp158. Position 246 (His246) interacts with Fe cation. Positions 248 and 257 each coordinate 2-oxoglutarate.

The protein belongs to the PhyH family. PHYHD1 subfamily. Requires Fe cation as cofactor.

Its function is as follows. 2-oxoglutarate(2OG)-dependent dioxygenase that catalyzes the conversion of 2-oxoglutarate to succinate and CO(2) in an iron-dependent manner. However, does not couple 2OG turnover to the hydroxylation of acyl-coenzyme A derivatives, implying that it is not directly involved in phytanoyl coenzyme-A metabolism. Does not show detectable activity towards fatty acid CoA thioesters. The sequence is that of Phytanoyl-CoA dioxygenase domain-containing protein 1 from Mus musculus (Mouse).